The following is a 110-amino-acid chain: uncharacterized protein (110 aa).

Residues 88–108 (LTRICLLIFGIGLVVLIFLKL) form a helical membrane-spanning segment.

The protein localises to the membrane. This is an uncharacterized protein from Rickettsia prowazekii (strain Madrid E).